A 710-amino-acid chain; its full sequence is Protein Smaug homolog 1 (710 aa).

2 disordered regions span residues 276 to 319 and 441 to 476; these read ARGS…FQDE and NQAT…ESDL. The span at 309–318 shows a compositional bias: polar residues; it reads QSTACNTFQD. Residues 319 to 379 enclose the SAM domain; the sequence is EGSGMKDVPA…KIVISIQKLK (61 aa).

The protein belongs to the SMAUG family.

The protein resides in the cytoplasm. The protein localises to the cell projection. It is found in the dendrite. Its subcellular location is the synapse. It localises to the synaptosome. Acts as a translational repressor. The sequence is that of Protein Smaug homolog 1 (samd4a) from Xenopus laevis (African clawed frog).